The following is a 505-amino-acid chain: Cytochrome P450 52C1 (505 aa).

The helical transmembrane segment at 4–21 (LFCFLAGIIVVYKAAQYY) threads the bilayer. C453 is a binding site for heme.

The protein belongs to the cytochrome P450 family. The cofactor is heme.

It is found in the membrane. Functionally, together with an NADPH cytochrome P450 the enzyme system catalyzes the terminal hydroxylation as the first step in the assimilation of alkanes and fatty acids. The polypeptide is Cytochrome P450 52C1 (CYP52C1) (Candida tropicalis (Yeast)).